The following is a 157-amino-acid chain: Transcriptional repressor NrdR (157 aa).

The segment at 3–34 (CPFCRHPDSRVIDSRTSDDGLSIRRRRQCPEC) is a zinc-finger region. The ATP-cone domain occupies 46 to 136 (LSVIKRSGVV…VYQAFDSLED (91 aa)).

Belongs to the NrdR family. Requires Zn(2+) as cofactor.

Negatively regulates transcription of bacterial ribonucleotide reductase nrd genes and operons by binding to NrdR-boxes. This is Transcriptional repressor NrdR from Leifsonia xyli subsp. xyli (strain CTCB07).